We begin with the raw amino-acid sequence, 259 residues long: Protein unc-50 homolog (259 aa).

Position 1 is an N-acetylmethionine (methionine 1). Over 1 to 82 (MLPSTSLNSS…TKDQWARDDP (82 aa)) the chain is Cytoplasmic. Serine 6 carries the post-translational modification Phosphoserine. A helical membrane pass occupies residues 83-103 (AFLVLLSIWLCVSTIGFGFVL). Over 104-115 (DMGFFETIKLLL) the chain is Lumenal. The helical transmembrane segment at 116–136 (WVVFIDCVGVGLLISTLMWFI) threads the bilayer. At 137–163 (SNKYLVKRQSRDYDVEWGYAFDVHLNA) the chain is on the cytoplasmic side. The chain crosses the membrane as a helical span at residues 164-184 (FYPLLVILHFIQLFFINHVIL). At 185-187 (TDT) the chain is on the lumenal side. The helical transmembrane segment at 188–208 (FIGYLVGNTLWLIAVGYYIYV) threads the bilayer. Residues 209–222 (TFLGYSALPFLKNT) lie on the Cytoplasmic side of the membrane. The chain crosses the membrane as a helical span at residues 223-243 (VVLLYPFAPLIVLYGLSLALG). Topologically, residues 244–259 (WNFTHTLCSFYKYRVK) are lumenal.

Belongs to the unc-50 family. As to expression, expressed in brain, kidney and testis, and at lower levels in heart.

The protein localises to the nucleus inner membrane. It localises to the golgi apparatus membrane. Involved in the cell surface expression of neuronal nicotinic receptors. Binds RNA. This Rattus norvegicus (Rat) protein is Protein unc-50 homolog (Unc50).